The chain runs to 440 residues: V-type ATP synthase beta chain (440 aa).

Belongs to the ATPase alpha/beta chains family.

Produces ATP from ADP in the presence of a proton gradient across the membrane. The V-type beta chain is a regulatory subunit. In Geotalea uraniireducens (strain Rf4) (Geobacter uraniireducens), this protein is V-type ATP synthase beta chain.